The primary structure comprises 338 residues: Glycerol-3-phosphate dehydrogenase [NAD(P)+] (338 aa).

3 residues coordinate NADPH: S13, W14, and K108. Sn-glycerol 3-phosphate is bound by residues K108, G139, and S141. Residue A143 participates in NADPH binding. The sn-glycerol 3-phosphate site is built by K194, D247, S257, R258, and N259. The active-site Proton acceptor is K194. R258 contacts NADPH. NADPH contacts are provided by V282 and E284.

It belongs to the NAD-dependent glycerol-3-phosphate dehydrogenase family.

It is found in the cytoplasm. The enzyme catalyses sn-glycerol 3-phosphate + NAD(+) = dihydroxyacetone phosphate + NADH + H(+). It catalyses the reaction sn-glycerol 3-phosphate + NADP(+) = dihydroxyacetone phosphate + NADPH + H(+). Its pathway is membrane lipid metabolism; glycerophospholipid metabolism. Functionally, catalyzes the reduction of the glycolytic intermediate dihydroxyacetone phosphate (DHAP) to sn-glycerol 3-phosphate (G3P), the key precursor for phospholipid synthesis. This Listeria monocytogenes serotype 4b (strain CLIP80459) protein is Glycerol-3-phosphate dehydrogenase [NAD(P)+].